The sequence spans 152 residues: Snaclec anticoagulant protein subunit A (152 aa).

A signal peptide spans 1–23 (MGRFIFVSFGLLVVYLSLSGTAA). Residues 24-152 (DCSSSWSSYE…EQRDPFVCEA (129 aa)) form the C-type lectin domain. 3 disulfide bridges follow: C25/C36, C53/C150, and C125/C142. Ca(2+) is bound by residues S64, E66, and E70. E151 serves as a coordination point for Ca(2+).

The protein belongs to the snaclec family. In terms of assembly, heterodimer of subunits A and B; disulfide-linked. In terms of tissue distribution, expressed by the venom gland.

It is found in the secreted. Functionally, anticoagulant protein which binds to the gamma-carboxyglutamic acid-domain regions of factors IX and factor X in the presence of calcium with a 1 to 1 stoichiometry. Also inhibits platelet aggregation by binding to platelet glycoprotein Ibalpha (GP1BA) and functioning as a blocker of vWF. Is devoid of hemorrhagic and lethal activities. Possesses antithrombotic and thrombolytic activities. Also hydrolyzes the Aalpha-chain of fibrinogen. Does not affect the Bbeta-chain and the gamma chain. The sequence is that of Snaclec anticoagulant protein subunit A from Deinagkistrodon acutus (Hundred-pace snake).